The following is a 502-amino-acid chain: ATP synthase subunit alpha, sodium ion specific (502 aa).

An ATP-binding site is contributed by glycine 169–threonine 176.

Belongs to the ATPase alpha/beta chains family. F-type ATPases have 2 components, CF(1) - the catalytic core - and CF(0) - the membrane proton channel. CF(1) has five subunits: alpha(3), beta(3), gamma(1), delta(1), epsilon(1). CF(0) has three main subunits: a, b and c.

The protein resides in the cell membrane. The catalysed reaction is 4 Na(+)(in) + ATP + H2O = 4 Na(+)(out) + ADP + phosphate + H(+). Its activity is regulated as follows. Inhibited by nitrate. Its function is as follows. Produces ATP from ADP in the presence of a sodium ion gradient across the membrane. The alpha chain is a regulatory subunit. The sequence is that of ATP synthase subunit alpha, sodium ion specific from Acetobacterium woodii (strain ATCC 29683 / DSM 1030 / JCM 2381 / KCTC 1655 / WB1).